Reading from the N-terminus, the 1346-residue chain is Zinc finger protein 541 (1346 aa).

2 disordered regions span residues 1 to 34 (MDQY…DTLN) and 113 to 136 (EADE…SSPQ). Positions 21–32 (FSESQGLNCSDT) are enriched in polar residues. C2H2-type zinc fingers lie at residues 140–162 (LDCS…YLTH), 168–190 (HVCK…MLTH), and 196–220 (FVCI…YEVH). 4 disordered regions span residues 235 to 271 (ACGD…LLPH), 283 to 328 (VHQK…AAPA), 437 to 472 (SAVP…EDAL), and 578 to 744 (SQLP…GGYR). Composition is skewed to low complexity over residues 294-323 (PAGA…PAGP) and 440-458 (PSRE…SPSE). The span at 671-685 (PDISSLAKQLRSSKG) shows a compositional bias: polar residues. The segment at 838 to 860 (FVCKNCSQMFYTEKGLSSHMCFH) adopts a C2H2-type 4 zinc-finger fold. Positions 931–971 (AMGQEKDGEERDSKESSQQRKRKKRPPPSTAGEPGPAGCHQ) are disordered. Residues 934–948 (QEKDGEERDSKESSQ) are compositionally biased toward basic and acidic residues. In terms of domain architecture, ELM2 spans 1053–1145 (PHINIGSRFQ…VALETLLLRG (93 aa)). The region spanning 1160–1211 (TGSDVWTPIEKRLFKKAFYAHKKDFYLIHKMIQTKTVAQCVEYYYIWKKMIK) is the SANT domain. The tract at residues 1224 to 1281 (VKREPEEVERTEEKVPCSPRERPSHHPTPKLKTKSYRRESILSSSPNAGSKRTPELLG) is disordered. The span at 1234–1247 (TEEKVPCSPRERPS) shows a compositional bias: basic and acidic residues. A compositionally biased stretch (basic residues) spans 1248-1258 (HHPTPKLKTKS). Residues 1264-1273 (ILSSSPNAGS) show a composition bias toward polar residues. The C2H2-type 5 zinc-finger motif lies at 1289–1311 (FPCRECERVFDKIKSRNAHMKRH).

Interacts with DNTTIP1. Identified in a complex with KCDT19, HDAC1 and HSPA2. Component of a histone deacetylase complex containing DNTTIP1, ZNF541, HDAC1 and HDAC2. Identified in a complex with HDAC1, HDAC2, DNTTIP1 and KCTD19.

The protein resides in the nucleus. Transcription regulator which is essential for male fertility and for the completion of meiotic prophase in spermatocytes. Regulates progression of the pachytene stage of meiotic prophase by activating the expression of genes involved in meiosis during spermatogenesis. Maintains the repression of pre-pachytene transcriptional programs, including meiotic double-strand breaks (DSB) formation genes in pachytene spermatocytes and suppresses aberrant DSB formation after mid-pachytene, thus ensuring meiosis progression. This Homo sapiens (Human) protein is Zinc finger protein 541 (ZNF541).